We begin with the raw amino-acid sequence, 414 residues long: Serine hydroxymethyltransferase (414 aa).

(6S)-5,6,7,8-tetrahydrofolate contacts are provided by residues Leu121 and 125 to 127; that span reads GHL. An N6-(pyridoxal phosphate)lysine modification is found at Lys229.

This sequence belongs to the SHMT family. In terms of assembly, homodimer. The cofactor is pyridoxal 5'-phosphate.

It localises to the cytoplasm. It catalyses the reaction (6R)-5,10-methylene-5,6,7,8-tetrahydrofolate + glycine + H2O = (6S)-5,6,7,8-tetrahydrofolate + L-serine. It participates in one-carbon metabolism; tetrahydrofolate interconversion. It functions in the pathway amino-acid biosynthesis; glycine biosynthesis; glycine from L-serine: step 1/1. In terms of biological role, catalyzes the reversible interconversion of serine and glycine with tetrahydrofolate (THF) serving as the one-carbon carrier. This reaction serves as the major source of one-carbon groups required for the biosynthesis of purines, thymidylate, methionine, and other important biomolecules. Also exhibits THF-independent aldolase activity toward beta-hydroxyamino acids, producing glycine and aldehydes, via a retro-aldol mechanism. The sequence is that of Serine hydroxymethyltransferase from Herminiimonas arsenicoxydans.